The primary structure comprises 64 residues: Large ribosomal subunit protein uL29 (64 aa).

This sequence belongs to the universal ribosomal protein uL29 family.

The polypeptide is Large ribosomal subunit protein uL29 (Teredinibacter turnerae (strain ATCC 39867 / T7901)).